A 307-amino-acid chain; its full sequence is GMP synthase [glutamine-hydrolyzing] subunit B (307 aa).

The GMPS ATP-PPase domain occupies Met-1–Arg-184. Ser-27–Ser-33 is a binding site for ATP.

As to quaternary structure, heterodimer composed of a glutamine amidotransferase subunit (A) and a GMP-binding subunit (B).

It carries out the reaction XMP + L-glutamine + ATP + H2O = GMP + L-glutamate + AMP + diphosphate + 2 H(+). Its pathway is purine metabolism; GMP biosynthesis; GMP from XMP (L-Gln route): step 1/1. Functionally, catalyzes the synthesis of GMP from XMP. This is GMP synthase [glutamine-hydrolyzing] subunit B from Thermococcus kodakarensis (strain ATCC BAA-918 / JCM 12380 / KOD1) (Pyrococcus kodakaraensis (strain KOD1)).